The sequence spans 369 residues: UPF0754 membrane protein Aflv_2299 (369 aa).

Transmembrane regions (helical) follow at residues 1-21 (MGLF…GGMT) and 347-367 (YLGA…TFFV).

It belongs to the UPF0754 family.

It localises to the cell membrane. This Anoxybacillus flavithermus (strain DSM 21510 / WK1) protein is UPF0754 membrane protein Aflv_2299.